A 146-amino-acid chain; its full sequence is PSVYDAAAQLTADVKKDLRDSWKVIGSDKKGNGVALMTTLFADNQETIGYFKRLGDVSQGMANDKLRGHSITLMYALQNFIDQLDNPDDLVCVVEKFAVNHITRKISAAEFGKINGPIKKVLASKNFGDKYANAWAKLVAVVQAAL.

The Globin domain maps to 9–146; sequence QLTADVKKDL…KLVAVVQAAL (138 aa). Position 101 (His-101) interacts with heme b.

It belongs to the globin family. As to quaternary structure, homodimer.

The protein resides in the cytoplasm. The chain is Globin-1 from Anadara inaequivalvis (Inequivalve ark).